Reading from the N-terminus, the 444-residue chain is Argininosuccinate synthase (444 aa).

ATP-binding positions include 18–26 and Ala-44; that span reads AFSGGLDTS. Residue Tyr-100 participates in L-citrulline binding. Residues Gly-130 and Thr-132 each contribute to the ATP site. Residues Thr-132, Asn-136, and Asp-137 each contribute to the L-aspartate site. Asn-136 is an L-citrulline binding site. Residue Asp-137 coordinates ATP. Positions 140 and 193 each coordinate L-citrulline. Asp-195 serves as a coordination point for ATP. L-citrulline-binding residues include Thr-202, Glu-204, and Glu-281.

It belongs to the argininosuccinate synthase family. Type 2 subfamily. In terms of assembly, homotetramer.

It localises to the cytoplasm. It catalyses the reaction L-citrulline + L-aspartate + ATP = 2-(N(omega)-L-arginino)succinate + AMP + diphosphate + H(+). It participates in amino-acid biosynthesis; L-arginine biosynthesis; L-arginine from L-ornithine and carbamoyl phosphate: step 2/3. This chain is Argininosuccinate synthase, found in Histophilus somni (strain 129Pt) (Haemophilus somnus).